The sequence spans 542 residues: Protein phosphatase 1G (542 aa).

A lipid anchor (N-myristoyl glycine) is attached at Gly-2. Arg-22 is subject to Omega-N-methylarginine. One can recognise a PPM-type phosphatase domain in the interval 26–502 (PYGFSAMQGW…DNMTCIIICF (477 aa)). Mn(2+) is bound by residues Asp-60 and Gly-61. Disordered stretches follow at residues 117–136 (IAGRPTEDEDDKDKVADEDD) and 164–325 (CQKV…SDSG). Position 122 is a phosphothreonine (Thr-122). Composition is skewed to acidic residues over residues 123 to 136 (EDEDDKDKVADEDD) and 259 to 309 (DSED…DEEM). N6-acetyllysine is present on Lys-380. Mn(2+) is bound by residues Asp-438 and Asp-493. The disordered stretch occupies residues 513 to 542 (ESGKRKLEEALSTEGAEDTGNSDKKKAKRD). Ser-524 is modified (phosphoserine).

It belongs to the PP2C family. As to quaternary structure, interacts with NOL3; may dephosphorylate NOL3. The cofactor is Mg(2+). Mn(2+) serves as cofactor. As to expression, highly expressed in testis. Low level of expression in kidney. Also expressed in a number of tissues undergoing proliferation including embryo, uterus at pregnancy, placenta, and ovaries.

It localises to the nucleus. The protein resides in the membrane. It catalyses the reaction O-phospho-L-seryl-[protein] + H2O = L-seryl-[protein] + phosphate. It carries out the reaction O-phospho-L-threonyl-[protein] + H2O = L-threonyl-[protein] + phosphate. Its function is as follows. May be involved in regulation of cell cycle. The protein is Protein phosphatase 1G (Ppm1g) of Mus musculus (Mouse).